A 510-amino-acid polypeptide reads, in one-letter code: NAD(P)H-quinone oxidoreductase subunit 2, chloroplastic (510 aa).

12 helical membrane-spanning segments follow: residues 24–44, 59–79, 99–119, 124–144, 149–169, 183–203, 229–249, 295–315, 323–343, 354–374, 395–415, and 418–438; these read LLLF…GLIL, WFYF…LFRW, IFQF…VEYI, MAIT…MFLC, LITI…LSGY, YLLM…WLYG, ISIA…PAPF, WHLL…LIAI, MLAY…IVGD, YMLF…LFGL, ALSS…AGFF, and LHLF…IGLL.

Belongs to the complex I subunit 2 family. NDH is composed of at least 16 different subunits, 5 of which are encoded in the nucleus.

It is found in the plastid. Its subcellular location is the chloroplast thylakoid membrane. The enzyme catalyses a plastoquinone + NADH + (n+1) H(+)(in) = a plastoquinol + NAD(+) + n H(+)(out). The catalysed reaction is a plastoquinone + NADPH + (n+1) H(+)(in) = a plastoquinol + NADP(+) + n H(+)(out). NDH shuttles electrons from NAD(P)H:plastoquinone, via FMN and iron-sulfur (Fe-S) centers, to quinones in the photosynthetic chain and possibly in a chloroplast respiratory chain. The immediate electron acceptor for the enzyme in this species is believed to be plastoquinone. Couples the redox reaction to proton translocation, and thus conserves the redox energy in a proton gradient. In Ensete ventricosum (Abyssinian banana), this protein is NAD(P)H-quinone oxidoreductase subunit 2, chloroplastic.